The chain runs to 688 residues: Translation initiation factor IF-2 (688 aa).

A disordered region spans residues 62–103 (EFEVEEKVVRSKKNSNKKKKKGKGNEDKRQDNFAGRQQTQIV). Positions 71–83 (RSKKNSNKKKKKG) are enriched in basic residues. Residues 190 to 359 (ERPAVVTIMG…LLVSEVEEYK (170 aa)) enclose the tr-type G domain. Residues 199–206 (GHVDHGKT) are G1. GTP is bound at residue 199 to 206 (GHVDHGKT). A G2 region spans residues 224-228 (GITQH). The segment at 245–248 (DTPG) is G3. Residues 245–249 (DTPGH) and 299–302 (NKMD) each bind GTP. The tract at residues 299–302 (NKMD) is G4. The tract at residues 335–337 (SAI) is G5.

It belongs to the TRAFAC class translation factor GTPase superfamily. Classic translation factor GTPase family. IF-2 subfamily.

It is found in the cytoplasm. In terms of biological role, one of the essential components for the initiation of protein synthesis. Protects formylmethionyl-tRNA from spontaneous hydrolysis and promotes its binding to the 30S ribosomal subunits. Also involved in the hydrolysis of GTP during the formation of the 70S ribosomal complex. The protein is Translation initiation factor IF-2 of Bacillus cereus (strain G9842).